The chain runs to 351 residues: Protein RecA (351 aa).

An ATP-binding site is contributed by 64–71; it reads GPESSGKT. The tract at residues 330-351 is disordered; it reads DRFLQNGGPDPDDGDGDATAEM. Over residues 339 to 351 the composition is skewed to acidic residues; sequence DPDDGDGDATAEM.

The protein belongs to the RecA family.

The protein resides in the cytoplasm. Can catalyze the hydrolysis of ATP in the presence of single-stranded DNA, the ATP-dependent uptake of single-stranded DNA by duplex DNA, and the ATP-dependent hybridization of homologous single-stranded DNAs. It interacts with LexA causing its activation and leading to its autocatalytic cleavage. The protein is Protein RecA of Rhizobium leguminosarum bv. viciae.